The sequence spans 104 residues: Thiosulfate sulfurtransferase PspE (104 aa).

Residues 1-19 form the signal peptide; the sequence is MFKKGLLALALVFSLPVFA. Residues 20-104 form the Rhodanese domain; it reads AEHWIDVRVP…KDIAMPKVKG (85 aa). Cysteine 67 functions as the Cysteine persulfide intermediate in the catalytic mechanism.

Monomer.

It is found in the periplasm. It carries out the reaction thiosulfate + hydrogen cyanide = thiocyanate + sulfite + 2 H(+). With respect to regulation, inhibited by thiosulfate above 100 mM, particularly at low cyanide concentrations (&lt;5 mM). Inhibited by sodium sulfate or sodium chloride at 0.25 M which gives around 50% inhibition of rhodanese activity. Addition of sodium phosphate at the same concentration results in about 65% inhibition. Sulfite strongly inhibits PspE activity (1 mM sodium sulfite resulted in more than 50% inhibition of rhodanese activity). Functionally, the phage shock protein (psp) operon (pspABCDE) may play a significant role in the competition for survival under nutrient- or energy-limited conditions. PspE catalyzes the sulfur-transfer reaction from thiosulfate to cyanide, to form sulfite and thiocyanate. Also able to use dithiol (dithiothreitol) as an alternate sulfur acceptor. Also possesses a very low mercaptopyruvate sulfurtransferase activity. This is Thiosulfate sulfurtransferase PspE (pspE) from Escherichia coli (strain K12).